The primary structure comprises 283 residues: ATP phosphoribosyltransferase (283 aa).

Belongs to the ATP phosphoribosyltransferase family. Long subfamily. Requires Mg(2+) as cofactor.

The protein resides in the cytoplasm. It catalyses the reaction 1-(5-phospho-beta-D-ribosyl)-ATP + diphosphate = 5-phospho-alpha-D-ribose 1-diphosphate + ATP. It functions in the pathway amino-acid biosynthesis; L-histidine biosynthesis; L-histidine from 5-phospho-alpha-D-ribose 1-diphosphate: step 1/9. Its activity is regulated as follows. Feedback inhibited by histidine. Functionally, catalyzes the condensation of ATP and 5-phosphoribose 1-diphosphate to form N'-(5'-phosphoribosyl)-ATP (PR-ATP). Has a crucial role in the pathway because the rate of histidine biosynthesis seems to be controlled primarily by regulation of HisG enzymatic activity. This Bacteroides fragilis (strain ATCC 25285 / DSM 2151 / CCUG 4856 / JCM 11019 / LMG 10263 / NCTC 9343 / Onslow / VPI 2553 / EN-2) protein is ATP phosphoribosyltransferase.